The primary structure comprises 305 residues: Maximins-S type B/C (305 aa).

Positions 1-18 (MNFNYFILVLFFITSGHA) are cleaved as a signal peptide. 2 propeptides span residues 19 to 35 (KSETREVHQEAENHIKR) and 52 to 65 (SAEEQNLAEHLVTR). Residue Asn83 is modified to Asparagine amide. A propeptide spanning residues 87-100 (SAEEQDLAEHLVTR) is cleaved from the precursor. Asn118 bears the Asparagine amide mark. The propeptide occupies 122–135 (SAEEQDLAEDLVTR). Lysine amide is present on Lys153. The propeptide occupies 157 to 170 (SAEDQDLAEDLVTR). Position 188 is an asparagine amide (Asn188). The propeptide occupies 192–205 (SAEEQDLAEHLVTR). Residue Asn223 is modified to Asparagine amide. Residues 227–240 (SAEEQDLSEDLVTR) constitute a propeptide that is removed on maturation. Asn258 is subject to Asparagine amide. A propeptide spanning residues 262–275 (SAEEQDLVEDLVTR) is cleaved from the precursor. Lys293 is modified (lysine amide). Residues 297-305 (SAEQEKDMK) constitute a propeptide that is removed on maturation.

The protein belongs to the maximin-S family. Expressed by the skin dorsal glands.

It localises to the secreted. In terms of biological role, maximin-S1 has no antimicrobial activity. Has no hemolytic activity. Maximin-S2 has an activity against mycoplasma but has no activity against common Gram-positive and Gram-negative bacteria nor fungi. Has no hemolytic activity. Its function is as follows. Maximin-S3 has an activity against mycoplasma but has no activity against common Gram-positive and Gram-negative bacteria nor fungi. Has no hemolytic activity. Functionally, maximin-S4 has an activity against mycoplasma but has no activity against common Gram-positive and Gram-negative bacteria nor fungi. Has no hemolytic activity. In terms of biological role, maximin-S5 has an activity against mycoplasma but has no activity against common Gram-positive and Gram-negative bacteria nor fungi. Has no hemolytic activity. This Bombina maxima (Giant fire-bellied toad) protein is Maximins-S type B/C.